The following is a 706-amino-acid chain: Elongation factor G (706 aa).

The region spanning 15–291 (LKTRNIGISA…GVLDYLASPV (277 aa)) is the tr-type G domain. Residues 24–31 (AHIDSGKT), 91–95 (DTPGH), and 145–148 (NKLD) each bind GTP.

It belongs to the TRAFAC class translation factor GTPase superfamily. Classic translation factor GTPase family. EF-G/EF-2 subfamily.

The protein localises to the cytoplasm. Its function is as follows. Catalyzes the GTP-dependent ribosomal translocation step during translation elongation. During this step, the ribosome changes from the pre-translocational (PRE) to the post-translocational (POST) state as the newly formed A-site-bound peptidyl-tRNA and P-site-bound deacylated tRNA move to the P and E sites, respectively. Catalyzes the coordinated movement of the two tRNA molecules, the mRNA and conformational changes in the ribosome. The polypeptide is Elongation factor G (Leptospira borgpetersenii serovar Hardjo-bovis (strain L550)).